Reading from the N-terminus, the 260-residue chain is Voltage-dependent calcium channel gamma-6 subunit (260 aa).

The next 4 helical transmembrane spans lie at 43-63 (LLVA…EFWV), 143-163 (VIAV…IMVL), 169-189 (FLLR…FVSL), and 221-241 (LGCG…FLLL).

Belongs to the PMP-22/EMP/MP20 family. CACNG subfamily. As to quaternary structure, interacts with CACNA1C. Identified in a complex with the L-type calcium channel subunits CACNA1C, CACNA2D1 and either CACNB1 or CACNB2. Detected in heart atrium and ventricle, aorta and skeletal muscle. Detected in heart left ventricle.

The protein localises to the cell membrane. Its function is as follows. Regulates the activity of L-type calcium channels that contain CACNA1C as pore-forming subunit. This chain is Voltage-dependent calcium channel gamma-6 subunit (Cacng6), found in Rattus norvegicus (Rat).